We begin with the raw amino-acid sequence, 479 residues long: Chromosomal replication initiator protein DnaA (479 aa).

The domain I, interacts with DnaA modulators stretch occupies residues 1–94 (MKGGTMVENA…QTLWRTERED (94 aa)). Positions 94-142 (DIKGVELQVKRGLPEVSMGDAEDGEDGSGEGHELATQAAAPESRSDLAV) are domain II. The segment at 106–137 (LPEVSMGDAEDGEDGSGEGHELATQAAAPESR) is disordered. Positions 143–359 (PLDPRFTFDT…GALNRLIAHA (217 aa)) are domain III, AAA+ region. Residues Gly-188, Gly-190, Lys-191, and Thr-192 each contribute to the ATP site. The tract at residues 360–479 (DLVGRPVTLD…VELLRRMLEG (120 aa)) is domain IV, binds dsDNA.

Belongs to the DnaA family. In terms of assembly, oligomerizes as a right-handed, spiral filament on DNA at oriC.

Its subcellular location is the cytoplasm. Plays an essential role in the initiation and regulation of chromosomal replication. ATP-DnaA binds to the origin of replication (oriC) to initiate formation of the DNA replication initiation complex once per cell cycle. Binds the DnaA box (a 9 base pair repeat at the origin) and separates the double-stranded (ds)DNA. Forms a right-handed helical filament on oriC DNA; dsDNA binds to the exterior of the filament while single-stranded (ss)DNA is stabiized in the filament's interior. The ATP-DnaA-oriC complex binds and stabilizes one strand of the AT-rich DNA unwinding element (DUE), permitting loading of DNA polymerase. After initiation quickly degrades to an ADP-DnaA complex that is not apt for DNA replication. Binds acidic phospholipids. The chain is Chromosomal replication initiator protein DnaA from Gluconobacter oxydans (strain 621H) (Gluconobacter suboxydans).